The primary structure comprises 444 residues: Trigger factor (444 aa).

The PPIase FKBP-type domain maps to 170–255 (NDIAVIDFVG…LKAIKQLEIT (86 aa)).

Belongs to the FKBP-type PPIase family. Tig subfamily.

It is found in the cytoplasm. The catalysed reaction is [protein]-peptidylproline (omega=180) = [protein]-peptidylproline (omega=0). Involved in protein export. Acts as a chaperone by maintaining the newly synthesized protein in an open conformation. Functions as a peptidyl-prolyl cis-trans isomerase. The sequence is that of Trigger factor (tig) from Mycoplasma pneumoniae (strain ATCC 29342 / M129 / Subtype 1) (Mycoplasmoides pneumoniae).